The sequence spans 779 residues: Guanyl-specific ribonuclease pgl-1 (779 aa).

An involved in dimerization region spans residues 203–464 (KLLLEGVKEQ…KRIIDALEKS (262 aa)). Residue His453 is the Proton acceptor of the active site. Disordered regions lie at residues 563 to 596 (HEPQ…PTKS), 611 to 661 (RDAL…GDAT), and 718 to 779 (GRGG…GGNF). Positions 584 to 595 (SISTDGWDSPTK) are enriched in polar residues. A compositionally biased stretch (basic and acidic residues) spans 612-626 (DALKPDSVNSHRSEE). The RNA-binding RGG-box stretch occupies residues 699–772 (GGGGGSYGGR…GGDRGGRGGY (74 aa)).

Homodimer. Interacts with pgl-2 and pgl-3; this association is not required for P-granule localization of either pgl-2 or pgl-3. Interacts with ife-1. Interacts with prmt-1; the interaction is direct. Interacts with nmad-1. Interacts with P granule components meg-1, meg-3 and meg-4. Requires Does not require metal ions for catalytic activity. as cofactor.

It is found in the cytoplasmic granule. It catalyses the reaction [RNA] containing guanosine + H2O = an [RNA fragment]-3'-guanosine-3'-phosphate + a 5'-hydroxy-ribonucleotide-3'-[RNA fragment].. Functionally, guanyl-specific endoribonuclease which cleaves the phosphodiester bond in single-stranded RNA between the 3'-guanylic residue and the 5'-OH residue of adjacent nucleotide, resulting in the formation of a corresponding 2',3'-cyclic phosphate intermediate. Essential role in male and female postembryonic germline development; maternally provided protein maintains a population of proliferating germ cells and zygotic expression is required for correct oogenesis. Together with the P-granule component pgl-3, is involved in the formation of P-granules. Together with pgl-3, probably recruits other granule components such as pos-1, mex-3 and glh-1 to P-granules. In addition, may act redundantly with pgl-3 to protect germ cells from excessive germline apoptosis during normal oogenesis and development of the two gonadal arms. This may in part be through regulating the localization of sir-2.1 which is involved in germ cell apoptosis. May protect somatic cells from excessive apoptosis during normal development. In Caenorhabditis remanei (Caenorhabditis vulgaris), this protein is Guanyl-specific ribonuclease pgl-1.